Consider the following 173-residue polypeptide: Disulfide bond formation protein B 2 (173 aa).

The Cytoplasmic segment spans residues 1-9 (MSLAGSRLL). Residues 10–26 (FSLVFLVGALASWAAFN) form a helical membrane-spanning segment. At 27-44 (LQTGGGLESCSLWSVQRL) the chain is on the periplasmic side. A helical membrane pass occupies residues 45–61 (LLLALGGVNLLAVIQGP). Residues 62 to 67 (GRVGRA) are Cytoplasmic-facing. Residues 68–85 (VYWGLNLLLGLLGVVTAG) form a helical membrane-spanning segment. The Periplasmic segment spans residues 86 to 142 (RHVLLQNIPSEQLLACLPDMSFMLRQLSWWQALKLTFMGTSDCAEVTWTLLDMSLPE). The cysteines at positions 101 and 128 are disulfide-linked. The chain crosses the membrane as a helical span at residues 143-161 (WSLLFFVIMLIFSGYRLWR). At 162 to 173 (QLRGARKAVALP) the chain is on the cytoplasmic side.

Belongs to the DsbB family.

Its subcellular location is the cell inner membrane. Its function is as follows. Required for disulfide bond formation in some periplasmic proteins. Acts by oxidizing the DsbA protein. This is Disulfide bond formation protein B 2 from Pseudomonas fluorescens (strain ATCC BAA-477 / NRRL B-23932 / Pf-5).